Consider the following 347-residue polypeptide: Twinfilin-2 (347 aa).

2 consecutive ADF-H domains span residues 3 to 137 (LVLV…RHIT) and 175 to 311 (GLAF…DEVH). Residues 314-347 (QHAHKQAFAKPRGPAGKRGNKRLIKGGGENGGNS) are disordered. Positions 338–347 (KGGGENGGNS) are enriched in gly residues.

This sequence belongs to the actin-binding proteins ADF family. Twinfilin subfamily. In terms of assembly, interacts with G-actin; ADP-actin form and capping protein (CP).

It is found in the cytoplasm. It localises to the cytoskeleton. Its subcellular location is the perinuclear region. Functionally, actin-binding protein involved in motile and morphological processes. Inhibits actin polymerization, likely by sequestering G-actin. This Danio rerio (Zebrafish) protein is Twinfilin-2 (twf2).